Reading from the N-terminus, the 211-residue chain is MVVEKQTKYEEFRLKRVEENKKRMEALNLPKLSQILNSTSVKISPMKKRSIPRTPEKKMVDVKRVHIQRRGVGKKRDLLNRVYVSEEIRDEAISRANKFQDELGSGYPSFVKSMLQSHVSGGFWLGLPVQFCKSHLGLHDGVITLIDEEGEEYETIYLARKNGLSGGWMGFAVAHNLAYGDTLVFELVRRTAFKVYITRVGSCGESSKDMS.

A DNA-binding region (TF-B3) is located at residues 110–201 (FVKSMLQSHV…AFKVYITRVG (92 aa)).

It localises to the nucleus. This is B3 domain-containing protein At5g42700 from Arabidopsis thaliana (Mouse-ear cress).